Reading from the N-terminus, the 498-residue chain is DNA-directed RNA polymerase subunit Rpo2N (498 aa).

Belongs to the RNA polymerase beta chain family. As to quaternary structure, part of the RNA polymerase complex.

It is found in the cytoplasm. The catalysed reaction is RNA(n) + a ribonucleoside 5'-triphosphate = RNA(n+1) + diphosphate. In terms of biological role, DNA-dependent RNA polymerase (RNAP) catalyzes the transcription of DNA into RNA using the four ribonucleoside triphosphates as substrates. The Rpo2 subunit (Rpo2N and Rpo2C in this organism) is implicated in DNA promoter recognition and in nucleotide binding. The sequence is that of DNA-directed RNA polymerase subunit Rpo2N from Methanocaldococcus jannaschii (strain ATCC 43067 / DSM 2661 / JAL-1 / JCM 10045 / NBRC 100440) (Methanococcus jannaschii).